The sequence spans 302 residues: Aspartate carbamoyltransferase catalytic subunit (302 aa).

The carbamoyl phosphate site is built by R53 and T54. Position 82 (K82) interacts with L-aspartate. Carbamoyl phosphate contacts are provided by R103, H131, and Q134. 2 residues coordinate L-aspartate: R164 and R223. The carbamoyl phosphate site is built by L260 and P261.

Belongs to the aspartate/ornithine carbamoyltransferase superfamily. ATCase family. In terms of assembly, heterooligomer of catalytic and regulatory chains.

The enzyme catalyses carbamoyl phosphate + L-aspartate = N-carbamoyl-L-aspartate + phosphate + H(+). It participates in pyrimidine metabolism; UMP biosynthesis via de novo pathway; (S)-dihydroorotate from bicarbonate: step 2/3. Its function is as follows. Catalyzes the condensation of carbamoyl phosphate and aspartate to form carbamoyl aspartate and inorganic phosphate, the committed step in the de novo pyrimidine nucleotide biosynthesis pathway. The polypeptide is Aspartate carbamoyltransferase catalytic subunit (Methanococcus maripaludis (strain DSM 14266 / JCM 13030 / NBRC 101832 / S2 / LL)).